Reading from the N-terminus, the 210-residue chain is Outer-membrane lipoprotein LolB (210 aa).

The signal sequence occupies residues 1 to 18; that stretch reads MKKLTKLLSLTLLFALAG. Residue cysteine 19 is the site of N-palmitoyl cysteine attachment. A lipid anchor (S-diacylglycerol cysteine) is attached at cysteine 19.

Belongs to the LolB family. In terms of assembly, monomer.

Its subcellular location is the cell outer membrane. Plays a critical role in the incorporation of lipoproteins in the outer membrane after they are released by the LolA protein. The protein is Outer-membrane lipoprotein LolB of Glaesserella parasuis serovar 5 (strain SH0165) (Haemophilus parasuis).